The following is a 357-amino-acid chain: Alanine racemase (357 aa).

Lys35 functions as the Proton acceptor; specific for D-alanine in the catalytic mechanism. Lys35 is modified (N6-(pyridoxal phosphate)lysine). A substrate-binding site is contributed by Arg131. The active-site Proton acceptor; specific for L-alanine is the Tyr256. Met304 contacts substrate.

This sequence belongs to the alanine racemase family. Pyridoxal 5'-phosphate serves as cofactor.

The catalysed reaction is L-alanine = D-alanine. Its pathway is amino-acid biosynthesis; D-alanine biosynthesis; D-alanine from L-alanine: step 1/1. Its function is as follows. Catalyzes the interconversion of L-alanine and D-alanine. May also act on other amino acids. The chain is Alanine racemase (alr) from Legionella pneumophila (strain Corby).